The primary structure comprises 168 residues: Transcription antitermination protein NusB (168 aa).

It belongs to the NusB family.

Its function is as follows. Involved in transcription antitermination. Required for transcription of ribosomal RNA (rRNA) genes. Binds specifically to the boxA antiterminator sequence of the ribosomal RNA (rrn) operons. This Chlamydia trachomatis serovar A (strain ATCC VR-571B / DSM 19440 / HAR-13) protein is Transcription antitermination protein NusB.